Here is a 312-residue protein sequence, read N- to C-terminus: 4-diphosphocytidyl-2-C-methyl-D-erythritol kinase (312 aa).

Lys-16 is an active-site residue. 101-111 (PIGAGLAGGSS) contacts ATP. The active site involves Asp-143.

The protein belongs to the GHMP kinase family. IspE subfamily.

The enzyme catalyses 4-CDP-2-C-methyl-D-erythritol + ATP = 4-CDP-2-C-methyl-D-erythritol 2-phosphate + ADP + H(+). The protein operates within isoprenoid biosynthesis; isopentenyl diphosphate biosynthesis via DXP pathway; isopentenyl diphosphate from 1-deoxy-D-xylulose 5-phosphate: step 3/6. In terms of biological role, catalyzes the phosphorylation of the position 2 hydroxy group of 4-diphosphocytidyl-2C-methyl-D-erythritol. This chain is 4-diphosphocytidyl-2-C-methyl-D-erythritol kinase, found in Prochlorococcus marinus (strain MIT 9515).